The sequence spans 159 residues: Protein-export protein SecB (159 aa).

This sequence belongs to the SecB family. In terms of assembly, homotetramer, a dimer of dimers. One homotetramer interacts with 1 SecA dimer.

It is found in the cytoplasm. Its function is as follows. One of the proteins required for the normal export of preproteins out of the cell cytoplasm. It is a molecular chaperone that binds to a subset of precursor proteins, maintaining them in a translocation-competent state. It also specifically binds to its receptor SecA. The chain is Protein-export protein SecB from Marinomonas sp. (strain MWYL1).